A 141-amino-acid polypeptide reads, in one-letter code: Nucleoside diphosphate kinase 1 (141 aa).

Lys11, Phe59, Arg87, Thr93, Arg104, and Asn114 together coordinate ATP. His117 serves as the catalytic Pros-phosphohistidine intermediate.

The protein belongs to the NDK family. Homotetramer. Mg(2+) is required as a cofactor.

The protein localises to the cytoplasm. The enzyme catalyses a 2'-deoxyribonucleoside 5'-diphosphate + ATP = a 2'-deoxyribonucleoside 5'-triphosphate + ADP. The catalysed reaction is a ribonucleoside 5'-diphosphate + ATP = a ribonucleoside 5'-triphosphate + ADP. Its function is as follows. Major role in the synthesis of nucleoside triphosphates other than ATP. The ATP gamma phosphate is transferred to the NDP beta phosphate via a ping-pong mechanism, using a phosphorylated active-site intermediate. The polypeptide is Nucleoside diphosphate kinase 1 (Protochlamydia amoebophila (strain UWE25)).